The chain runs to 105 residues: Large ribosomal subunit protein eL36 (105 aa).

The interval 86–105 (QAGKKKRDDIANINRKASAK) is disordered.

Belongs to the eukaryotic ribosomal protein eL36 family.

This Dictyostelium discoideum (Social amoeba) protein is Large ribosomal subunit protein eL36 (rpl36).